A 335-amino-acid chain; its full sequence is MGCLLFLLLWALLQAWGSAEVPQRLFPLRCLQISSFANSSWTRTDGLAWLGELQTHSWSNDSDTVRSLKPWSQGTFSDQQWETLQHIFRVYRSSFTRDVKEFAKMLRLSYPLELQVSAGCEVHPGNASNNFFHVAFQGKDILSFQGTSWEPTQEAPLWVNLAIQVLNQDKWTRETVQWLLNGTCPQFVSGLLESGKSELKKQVKPKAWLSRGPSPGPGRLLLVCHVSGFYPKPVWVKWMRGEQEQQGTQPGDILPNADETWYLRATLDVVAGEAAGLSCRVKHSSLEGQDIVLYWGGSYTSMGLIALAVLACLLFLLIVGFTSRFKRQTSYQGVL.

A signal peptide spans 1–19 (MGCLLFLLLWALLQAWGSA). The Extracellular portion of the chain corresponds to 20-301 (EVPQRLFPLR…VLYWGGSYTS (282 aa)). 2 N-linked (GlcNAc...) asparagine glycosylation sites follow: Asn38 and Asn60. Asp98 serves as a coordination point for a D-galactosylceramide. Cystine bridges form between Cys120-Cys184 and Cys224-Cys279. Asn126 is a glycosylation site (N-linked (GlcNAc...) asparagine). Residue 169–172 (DKWT) participates in a D-galactosylceramide binding. The N-linked (GlcNAc...) asparagine glycan is linked to Asn181. The Ig-like domain occupies 185–292 (PQFVSGLLES…HSSLEGQDIV (108 aa)). A helical membrane pass occupies residues 302-322 (MGLIALAVLACLLFLLIVGFT). The Cytoplasmic segment spans residues 323 to 335 (SRFKRQTSYQGVL). An Internalization signal motif is present at residues 331 to 334 (YQGV).

Heterodimer with B2M (beta-2-microglobulin). Interacts with MHC II. As to expression, expressed on cortical thymocytes, on certain T-cell leukemias, and in various other tissues.

The protein resides in the cell membrane. It is found in the basolateral cell membrane. The protein localises to the endosome membrane. Its subcellular location is the lysosome membrane. It localises to the endoplasmic reticulum membrane. Functionally, antigen-presenting protein that binds self and non-self glycolipids and presents them to T-cell receptors on natural killer T-cells. This Homo sapiens (Human) protein is Antigen-presenting glycoprotein CD1d (CD1D).